The sequence spans 215 residues: Autophagy-related protein 101 (215 aa).

The interval 124–147 is disordered; the sequence is PVGKSHHSKLVMDPGEASEERSSR.

This sequence belongs to the ATG101 family. As to quaternary structure, interacts with ATG11 and ATG13A.

The protein localises to the cytoplasmic vesicle. Its subcellular location is the autophagosome. Its function is as follows. Accessory protein involved in autophagy. Acts as a scaffold protein of the ATG1-ATG13 complex for faithful delivery of autophagic vesicles to the vacuole. Required for selective mitophagy. The protein is Autophagy-related protein 101 of Arabidopsis thaliana (Mouse-ear cress).